The following is a 70-amino-acid chain: Beta-defensin 131B (70 aa).

A signal peptide spans 1–22; that stretch reads MRVLFFVFGVLSLMSTVPPTRS. 3 cysteine pairs are disulfide-bonded: Cys29-Cys56, Cys36-Cys50, and Cys40-Cys57.

The protein belongs to the beta-defensin family.

Its subcellular location is the secreted. Has antibacterial activity. This chain is Beta-defensin 131B, found in Homo sapiens (Human).